A 267-amino-acid polypeptide reads, in one-letter code: Tetrahydromethanopterin S-methyltransferase subunit C (267 aa).

The next 7 membrane-spanning stretches (helical) occupy residues 19 to 39 (IMALGIVGGLVGIYLGNFAPP), 75 to 95 (IGMLALGMGILAALFGLSVGG), 97 to 117 (AGPIVAIVVAAIIGGVIGALA), 140 to 160 (TLVILGLSVVIAGSFDFASVV), 162 to 182 (YVVANGYIALIFIIGGMGILH), 198 to 218 (LMLAVEKGAIALIIAGFASSL), and 221 to 241 (GLMAAGLNMLIGIIIWYVAFS).

The protein belongs to the MtrC family. As to quaternary structure, the complex is composed of 8 subunits; MtrA, MtrB, MtrC, MtrD, MtrE, MtrF, MtrG and MtrH.

The protein localises to the cell membrane. It carries out the reaction 5-methyl-5,6,7,8-tetrahydromethanopterin + coenzyme M + 2 Na(+)(in) = 5,6,7,8-tetrahydromethanopterin + methyl-coenzyme M + 2 Na(+)(out). It participates in one-carbon metabolism; methanogenesis from CO(2); methyl-coenzyme M from 5,10-methylene-5,6,7,8-tetrahydromethanopterin: step 2/2. Its function is as follows. Part of a complex that catalyzes the formation of methyl-coenzyme M and tetrahydromethanopterin from coenzyme M and methyl-tetrahydromethanopterin. This is an energy-conserving, sodium-ion translocating step. The protein is Tetrahydromethanopterin S-methyltransferase subunit C of Methanosarcina barkeri (strain Fusaro / DSM 804).